A 248-amino-acid polypeptide reads, in one-letter code: Adenosylcobinamide-GDP ribazoletransferase (248 aa).

A run of 6 helical transmembrane segments spans residues 36–56 (FFLPVVAFIIGGMEFLIYLGL), 59–79 (FLPANVIIVLLILFTAMVTGG), 114–134 (GTIALIIDLLLKYQLLYSLVL), 137–157 (YSIAIVLAPIIGRISILFLCL), 170–190 (IFIGNMSKPIVFFITTIILAL), and 199–219 (ATIIPFIGALLITYLLYLLCL).

The protein belongs to the CobS family. Mg(2+) serves as cofactor.

The protein localises to the cell membrane. The catalysed reaction is alpha-ribazole + adenosylcob(III)inamide-GDP = adenosylcob(III)alamin + GMP + H(+). The enzyme catalyses alpha-ribazole 5'-phosphate + adenosylcob(III)inamide-GDP = adenosylcob(III)alamin 5'-phosphate + GMP + H(+). It participates in cofactor biosynthesis; adenosylcobalamin biosynthesis; adenosylcobalamin from cob(II)yrinate a,c-diamide: step 7/7. Its function is as follows. Joins adenosylcobinamide-GDP and alpha-ribazole to generate adenosylcobalamin (Ado-cobalamin). Also synthesizes adenosylcobalamin 5'-phosphate from adenosylcobinamide-GDP and alpha-ribazole 5'-phosphate. This chain is Adenosylcobinamide-GDP ribazoletransferase, found in Clostridium botulinum (strain Kyoto / Type A2).